The sequence spans 361 residues: Chorismate synthase (361 aa).

Residues Arg48 and Arg54 each coordinate NADP(+). FMN is bound by residues 125–127 (RSS), 238–239 (NA), Gly278, 293–297 (KPTSS), and Arg319.

This sequence belongs to the chorismate synthase family. In terms of assembly, homotetramer. FMNH2 is required as a cofactor.

The enzyme catalyses 5-O-(1-carboxyvinyl)-3-phosphoshikimate = chorismate + phosphate. It participates in metabolic intermediate biosynthesis; chorismate biosynthesis; chorismate from D-erythrose 4-phosphate and phosphoenolpyruvate: step 7/7. Its function is as follows. Catalyzes the anti-1,4-elimination of the C-3 phosphate and the C-6 proR hydrogen from 5-enolpyruvylshikimate-3-phosphate (EPSP) to yield chorismate, which is the branch point compound that serves as the starting substrate for the three terminal pathways of aromatic amino acid biosynthesis. This reaction introduces a second double bond into the aromatic ring system. This Klebsiella pneumoniae subsp. pneumoniae (strain ATCC 700721 / MGH 78578) protein is Chorismate synthase.